The chain runs to 186 residues: ADP-ribosylation factor-like protein 6 (186 aa).

Residue Gly2 is the site of N-myristoyl glycine attachment. Residues 24-31 (GLDNSGKT), Thr50, 69-73 (DMSGQ), Gly72, 130-133 (NKMD), and Ala164 contribute to the GTP site. Thr50 serves as a coordination point for Mg(2+).

Belongs to the small GTPase superfamily. Arf family. Interacts with SEC61B, ARL6IP1, ARL6IP2, ARL6IP3, ARL6IP4 ARL6IP5 and ARL6IP6. Interacts (GTP-bound form) with the BBSome a complex that contains BBS1, BBS2, BBS4, BBS5, BBS7, BBS8/TTC8, BBS9 and BBIP10. Interacts (GTP-free form) with IFT27. In terms of tissue distribution, most abundant in brain and kidney. Expressed in heart and eye. Isoform 2 is expressed only in the retina.

It localises to the cell projection. Its subcellular location is the cilium membrane. The protein resides in the cytoplasm. The protein localises to the cytoskeleton. It is found in the cilium axoneme. It localises to the cilium basal body. Functionally, involved in membrane protein trafficking at the base of the ciliary organelle. Mediates recruitment onto plasma membrane of the BBSome complex which would constitute a coat complex required for sorting of specific membrane proteins to the primary cilia. Together with BBS1, is necessary for correct trafficking of PKD1 to primary cilia. Together with the BBSome complex and LTZL1, controls SMO ciliary trafficking and contributes to the sonic hedgehog (SHH) pathway regulation. May regulate cilia assembly and disassembly and subsequent ciliary signaling events such as the Wnt signaling cascade. Isoform 2 may be required for proper retinal function and organization. This is ADP-ribosylation factor-like protein 6 (Arl6) from Mus musculus (Mouse).